A 528-amino-acid chain; its full sequence is Coiled-coil domain-containing protein 116 (528 aa).

The interval 43–68 (GHVPHPPSTCGSSALQNQRRNKRHPQ) is disordered. Residues 51-60 (TCGSSALQNQ) show a composition bias toward polar residues. A coiled-coil region spans residues 81-104 (HVLDSLETVVEKATERMAAMKTEA). Disordered regions lie at residues 335-444 (PLFP…RQRA) and 497-528 (SSSPSSLCPEVTSSKVGPDMSLQEKGSLTHHS). A compositionally biased stretch (polar residues) spans 363 to 378 (PTNSGQPHPTVSSPKT). The residue at position 389 (Ser389) is a Phosphoserine. A compositionally biased stretch (basic and acidic residues) spans 419 to 429 (HSREKEPDSDP). Positions 434-443 (PPVSLSSRQR) are enriched in polar residues. The segment covering 497-510 (SSSPSSLCPEVTSS) has biased composition (low complexity).

The protein resides in the cytoplasm. The protein localises to the cytoskeleton. It localises to the microtubule organizing center. It is found in the centrosome. The protein is Coiled-coil domain-containing protein 116 (CCDC116) of Macaca fascicularis (Crab-eating macaque).